The following is a 485-amino-acid chain: tRNA sulfurtransferase (485 aa).

The THUMP domain occupies 63–167 (ERYAERLACI…NEHLYLVEKR (105 aa)). Residues 185–186 (LI), lysine 267, glycine 289, and glutamine 298 contribute to the ATP site. Cysteine 346 and cysteine 458 are disulfide-bonded. Residues 406-484 (VSGGEVVVDI…GYHNVKVYRP (79 aa)) form the Rhodanese domain. The active-site Cysteine persulfide intermediate is the cysteine 458.

This sequence belongs to the ThiI family.

The protein localises to the cytoplasm. The catalysed reaction is [ThiI sulfur-carrier protein]-S-sulfanyl-L-cysteine + a uridine in tRNA + 2 reduced [2Fe-2S]-[ferredoxin] + ATP + H(+) = [ThiI sulfur-carrier protein]-L-cysteine + a 4-thiouridine in tRNA + 2 oxidized [2Fe-2S]-[ferredoxin] + AMP + diphosphate. It carries out the reaction [ThiS sulfur-carrier protein]-C-terminal Gly-Gly-AMP + S-sulfanyl-L-cysteinyl-[cysteine desulfurase] + AH2 = [ThiS sulfur-carrier protein]-C-terminal-Gly-aminoethanethioate + L-cysteinyl-[cysteine desulfurase] + A + AMP + 2 H(+). Its pathway is cofactor biosynthesis; thiamine diphosphate biosynthesis. Functionally, catalyzes the ATP-dependent transfer of a sulfur to tRNA to produce 4-thiouridine in position 8 of tRNAs, which functions as a near-UV photosensor. Also catalyzes the transfer of sulfur to the sulfur carrier protein ThiS, forming ThiS-thiocarboxylate. This is a step in the synthesis of thiazole, in the thiamine biosynthesis pathway. The sulfur is donated as persulfide by IscS. This chain is tRNA sulfurtransferase, found in Shewanella loihica (strain ATCC BAA-1088 / PV-4).